Reading from the N-terminus, the 343-residue chain is Ribosomal RNA small subunit methyltransferase C (343 aa).

This sequence belongs to the methyltransferase superfamily. RsmC family. In terms of assembly, monomer.

Its subcellular location is the cytoplasm. It catalyses the reaction guanosine(1207) in 16S rRNA + S-adenosyl-L-methionine = N(2)-methylguanosine(1207) in 16S rRNA + S-adenosyl-L-homocysteine + H(+). Functionally, specifically methylates the guanine in position 1207 of 16S rRNA in the 30S particle. This chain is Ribosomal RNA small subunit methyltransferase C, found in Escherichia coli O6:H1 (strain CFT073 / ATCC 700928 / UPEC).